The following is a 254-amino-acid chain: Imidazole glycerol phosphate synthase subunit HisF (254 aa).

Residues Asp12 and Asp131 contribute to the active site.

The protein belongs to the HisA/HisF family. As to quaternary structure, heterodimer of HisH and HisF.

It is found in the cytoplasm. The enzyme catalyses 5-[(5-phospho-1-deoxy-D-ribulos-1-ylimino)methylamino]-1-(5-phospho-beta-D-ribosyl)imidazole-4-carboxamide + L-glutamine = D-erythro-1-(imidazol-4-yl)glycerol 3-phosphate + 5-amino-1-(5-phospho-beta-D-ribosyl)imidazole-4-carboxamide + L-glutamate + H(+). The protein operates within amino-acid biosynthesis; L-histidine biosynthesis; L-histidine from 5-phospho-alpha-D-ribose 1-diphosphate: step 5/9. Functionally, IGPS catalyzes the conversion of PRFAR and glutamine to IGP, AICAR and glutamate. The HisF subunit catalyzes the cyclization activity that produces IGP and AICAR from PRFAR using the ammonia provided by the HisH subunit. The polypeptide is Imidazole glycerol phosphate synthase subunit HisF (Herminiimonas arsenicoxydans).